The chain runs to 403 residues: ESX-5 secretion system protein EccE5 (403 aa).

2 helical membrane-spanning segments follow: residues 9–29 and 43–63; these read LALSWARLTTVFVIDLLILIV and IAWWVGVGIAVLVTLLSVVTY.

It belongs to the EccE family. Part of the ESX-5 / type VII secretion system (T7SS), which is composed of cytosolic and membrane components. The ESX-5 membrane complex is composed of EccB5, EccC5, EccD5 and EccE5.

It localises to the cell inner membrane. Its function is as follows. Part of the ESX-5 specialized secretion system, which is responsible for the secretion of EsxN and a number of PE_PGRS and PPE proteins. This chain is ESX-5 secretion system protein EccE5, found in Mycobacterium marinum (strain ATCC BAA-535 / M).